The sequence spans 267 residues: Regulatory protein VirG (267 aa).

A Response regulatory domain is found at 29-143 (HVLLVDDDVA…EFLARIRVAL (115 aa)). The residue at position 78 (aspartate 78) is a 4-aspartylphosphate. A DNA-binding region (ompR/PhoB-type) is located at residues 155 to 255 (RRSFCFTDWT…ARGAGYFFDA (101 aa)).

In terms of processing, phosphorylated by wide host range (WHR) VirA protein.

The protein localises to the cytoplasm. Its function is as follows. VirG is required for the positive regulation of at least two vir loci encoded by the Ti plasmid of A.tumefaciens. The chain is Regulatory protein VirG (virG) from Rhizobium radiobacter (Agrobacterium tumefaciens).